The sequence spans 440 residues: Na(+)/H(+) antiporter NhaA (440 aa).

11 consecutive transmembrane segments (helical) span residues 25–45 (FLHIEATSGLVLILCTVVALV), 76–96 (LHHVINDGLMAVFFFVIGLEV), 112–132 (TLPIAAAIGGMIVPATLYLSM), 141–161 (GWGIPMATDIAFVVGCLAILG), 170–190 (VLLLSLAIVDDIGAILVIAIG), 194–214 (SLDGRYLFLAAVAVGAVHFLS), 225–245 (VIVGVLAWIALHESGIHATLI), 312–332 (HPWTAYVIMPVFALANAGVLI), 345–365 (VVIGLVVGKPLGIALFSWLVI), 378–398 (WPILMSGSFLAGIGFTMALFI), and 414–434 (GVLVGSAISAIAGMGLLLWTL).

This sequence belongs to the NhaA Na(+)/H(+) (TC 2.A.33) antiporter family.

The protein resides in the cell inner membrane. It carries out the reaction Na(+)(in) + 2 H(+)(out) = Na(+)(out) + 2 H(+)(in). Na(+)/H(+) antiporter that extrudes sodium in exchange for external protons. This Rhodopirellula baltica (strain DSM 10527 / NCIMB 13988 / SH1) protein is Na(+)/H(+) antiporter NhaA.